We begin with the raw amino-acid sequence, 151 residues long: Large ribosomal subunit protein uL13 (151 aa).

Belongs to the universal ribosomal protein uL13 family. Part of the 50S ribosomal subunit.

This protein is one of the early assembly proteins of the 50S ribosomal subunit, although it is not seen to bind rRNA by itself. It is important during the early stages of 50S assembly. The chain is Large ribosomal subunit protein uL13 from Rippkaea orientalis (strain PCC 8801 / RF-1) (Cyanothece sp. (strain PCC 8801)).